The primary structure comprises 338 residues: Nucleoid-associated protein PM1885 (338 aa).

Belongs to the YejK family.

The protein resides in the cytoplasm. Its subcellular location is the nucleoid. This chain is Nucleoid-associated protein PM1885, found in Pasteurella multocida (strain Pm70).